Reading from the N-terminus, the 94-residue chain is Defensin-like protein 21 (94 aa).

The N-terminal stretch at 1–26 is a signal peptide; that stretch reads MVRTNVVSFVLFAAIVLCIGSIQIDG. 4 disulfides stabilise this stretch: C41-C92, C51-C79, C65-C88, and C69-C90.

The protein belongs to the DEFL family.

The protein localises to the secreted. This is Defensin-like protein 21 from Arabidopsis thaliana (Mouse-ear cress).